The sequence spans 339 residues: Chromo domain-containing protein cec-3 (339 aa).

A disordered region spans residues M1–D21. Residues F24 to L84 form the Chromo domain. The segment covering Q91 to K105 has biased composition (basic residues). 2 disordered regions span residues Q91–S199 and E215–L272. Composition is skewed to basic and acidic residues over residues T106 to D117 and A171 to L183. Residues D184–E193 show a composition bias toward acidic residues. Residues K230–S241 are compositionally biased toward basic and acidic residues. The span at E242–V251 shows a compositional bias: low complexity.

Expressed in every cell of the embryo (at protein level). In adults, expressed predominantly in the head region and the germline.

It is found in the chromosome. The protein localises to the nucleus. In terms of biological role, specifically recognizes and binds methylated 'Lys-9' of histone H3 (H3K9me), with highest preference for trimethylated 'Lys-9' (H3K9me3) followed by dimethylated 'Lys-9' (H3K9me2) followed by monomethylated 'Lys-9' (H3K9me1). Plays a role in maintaining correct unc-4 expression in the VC motor neurons where unc-4 is expressed in the vulval but not in the non-vulval VC neurons. This chain is Chromo domain-containing protein cec-3 (cec-3), found in Caenorhabditis elegans.